We begin with the raw amino-acid sequence, 112 residues long: Putative galactitol utilization operon repressor (112 aa).

In terms of domain architecture, HTH deoR-type spans 5 to 60 (SFERRNKIIQLVNEQGTVLVQDLAGVFAASEATIRADLRFLEQKGVVTRFHGGAAK). The H-T-H motif DNA-binding region spans 22 to 41 (VLVQDLAGVFAASEATIRAD).

Repressor of the gat operon for galacticol transport and metabolism. In K12 strains the operon is constitutively expressed because this gene is inactive. This is Putative galactitol utilization operon repressor (gatR) from Escherichia coli (strain K12).